Here is a 262-residue protein sequence, read N- to C-terminus: 4-hydroxy-2-oxo-heptane-1,7-dioate aldolase (262 aa).

The Proton acceptor role is filled by histidine 45. Glutamine 147 contacts substrate. Glutamate 149 is an a divalent metal cation binding site. 2 residues coordinate substrate: alanine 174 and aspartate 175. An a divalent metal cation-binding site is contributed by aspartate 175.

Belongs to the HpcH/HpaI aldolase family. In terms of assembly, homohexamer; trimer of dimers. The cofactor is a divalent metal cation.

The catalysed reaction is 4-hydroxy-2-oxoheptanedioate = succinate semialdehyde + pyruvate. It catalyses the reaction D-glyceraldehyde + 3-hydroxypyruvate = (3R,4S,5R)-3,4,5,6-tetrahydroxy-2-oxohexanoate. The enzyme catalyses D-glyceraldehyde + 3-hydroxypyruvate = 2-dehydro-D-gluconate. It carries out the reaction D-glyceraldehyde + 3-hydroxypyruvate = 2-dehydro-D-galactonate. The catalysed reaction is D-glyceraldehyde + pyruvate = 2-dehydro-3-deoxy-L-galactonate. It catalyses the reaction 2-dehydro-3-deoxy-D-gluconate = D-glyceraldehyde + pyruvate. The protein operates within aromatic compound metabolism; 4-hydroxyphenylacetate degradation; pyruvate and succinate semialdehyde from 4-hydroxyphenylacetate: step 7/7. Catalyzes the reversible retro-aldol cleavage of 4-hydroxy-2-ketoheptane-1,7-dioate (HKHD) to pyruvate and succinic semialdehyde. In vitro, can catalyze the aldolisation reaction between hydroxypyruvate (HPA) or pyruvate (PA) and D-glyceraldehyde (D-GA). The condensation of hydroxypyruvate and D-glyceraldehyde produces (3R,4S,5R)-3,4,5,6-tetrahydroxy-2-oxohexanoate as the major product, 2-dehydro-D-gluconate and 2-dehydro-D-galactonate. The condensation of pyruvate and D-glyceraldehyde produces 2-dehydro-3-deoxy-L-galactonate as the major product and 2-dehydro-3-deoxy-D-gluconate. This chain is 4-hydroxy-2-oxo-heptane-1,7-dioate aldolase, found in Escherichia coli (strain ATCC 8739 / DSM 1576 / NBRC 3972 / NCIMB 8545 / WDCM 00012 / Crooks).